The sequence spans 184 residues: Large ribosomal subunit protein uL6 (184 aa).

Belongs to the universal ribosomal protein uL6 family. Part of the 50S ribosomal subunit.

In terms of biological role, this protein binds to the 23S rRNA, and is important in its secondary structure. It is located near the subunit interface in the base of the L7/L12 stalk, and near the tRNA binding site of the peptidyltransferase center. The polypeptide is Large ribosomal subunit protein uL6 (Amoebophilus asiaticus (strain 5a2)).